The sequence spans 263 residues: ATP synthase subunit delta (263 aa).

This sequence belongs to the ATPase delta chain family. In terms of assembly, F-type ATPases have 2 components, F(1) - the catalytic core - and F(0) - the membrane proton channel. F(1) has five subunits: alpha(3), beta(3), gamma(1), delta(1), epsilon(1). F(0) has three main subunits: a(1), b(2) and c(10-14). The alpha and beta chains form an alternating ring which encloses part of the gamma chain. F(1) is attached to F(0) by a central stalk formed by the gamma and epsilon chains, while a peripheral stalk is formed by the delta and b chains.

It is found in the cell membrane. Functionally, f(1)F(0) ATP synthase produces ATP from ADP in the presence of a proton or sodium gradient. F-type ATPases consist of two structural domains, F(1) containing the extramembraneous catalytic core and F(0) containing the membrane proton channel, linked together by a central stalk and a peripheral stalk. During catalysis, ATP synthesis in the catalytic domain of F(1) is coupled via a rotary mechanism of the central stalk subunits to proton translocation. In terms of biological role, this protein is part of the stalk that links CF(0) to CF(1). It either transmits conformational changes from CF(0) to CF(1) or is implicated in proton conduction. The chain is ATP synthase subunit delta from Leifsonia xyli subsp. xyli (strain CTCB07).